Here is an 89-residue protein sequence, read N- to C-terminus: Small ribosomal subunit protein uS15 (89 aa).

Belongs to the universal ribosomal protein uS15 family. As to quaternary structure, part of the 30S ribosomal subunit. Forms a bridge to the 50S subunit in the 70S ribosome, contacting the 23S rRNA.

Functionally, one of the primary rRNA binding proteins, it binds directly to 16S rRNA where it helps nucleate assembly of the platform of the 30S subunit by binding and bridging several RNA helices of the 16S rRNA. Forms an intersubunit bridge (bridge B4) with the 23S rRNA of the 50S subunit in the ribosome. This is Small ribosomal subunit protein uS15 from Pseudomonas entomophila (strain L48).